The sequence spans 747 residues: DNA-directed RNA polymerase subunit beta' (747 aa).

C70, C72, C97, and C100 together coordinate Zn(2+). Mg(2+)-binding residues include D502, D504, and D506.

It belongs to the RNA polymerase beta' chain family. RpoC1 subfamily. In terms of assembly, in plastids the minimal PEP RNA polymerase catalytic core is composed of four subunits: alpha, beta, beta', and beta''. When a (nuclear-encoded) sigma factor is associated with the core the holoenzyme is formed, which can initiate transcription. It depends on Mg(2+) as a cofactor. Zn(2+) serves as cofactor.

Its subcellular location is the plastid. The protein resides in the chloroplast. The enzyme catalyses RNA(n) + a ribonucleoside 5'-triphosphate = RNA(n+1) + diphosphate. DNA-dependent RNA polymerase catalyzes the transcription of DNA into RNA using the four ribonucleoside triphosphates as substrates. In Gnetum parvifolium (Small-leaved jointfir), this protein is DNA-directed RNA polymerase subunit beta'.